Reading from the N-terminus, the 516-residue chain is MGHRLVVVLLLALLVAGAARAAEQAAGEDGIRGGAGADHQEAAGITGGLSRRSFPAGFVFGTAASAYQVEGMALKDGRGPSIWDAFVKTPGEIANNATADVTVDEYHRYKEDVNIMKSMGFDAYRFSISWSRIFPTGTGKVNWKGVAYYNRLINYMLKIGITPYANLYHYDLPEALEVQYGGLLNRKIVEAFADYAEFCFKTFGDRVKNWMTFNEPRVVAALGYDDGNFAPGRCTKCTAGNSATEPYIVAHHLILSHASAVQRYRHKYQHIQKGKIGILLDFVWYEGLTNSTADQAAAQRSRDFHVGWFLHPIIYGEYPKSLQVIVKERLPKFTADEVHMVKGSIDYVGINQYTAYYVRDQQPNATTLPSYSSDWHAAPIYERDGVPIGPRANSDWLYIVPWGLYKAVTYVKEKYGNPTMFLSENGMDDPGNVTIAQGVHDTTRVAYYRSYITKLKEAIDDGANCIGYFAWSLLDNFEWKLGYTSRFGLVYVDFRTLRRYPKMSAYWFRDLVSSKN.

The first 21 residues, 1–21 (MGHRLVVVLLLALLVAGAARA), serve as a signal peptide directing secretion. A beta-D-glucoside is bound at residue glutamine 68. Asparagine 96 carries N-linked (GlcNAc...) asparagine glycosylation. Residues histidine 169 and 214–215 (NE) contribute to the a beta-D-glucoside site. The active-site Proton donor is glutamate 215. A disulfide bridge links cysteine 234 with cysteine 237. An N-linked (GlcNAc...) asparagine glycan is attached at asparagine 290. Residue tyrosine 353 participates in a beta-D-glucoside binding. N-linked (GlcNAc...) asparagine glycosylation is present at asparagine 364. Position 424 (glutamate 424) interacts with a beta-D-glucoside. Glutamate 424 acts as the Nucleophile in catalysis. N-linked (GlcNAc...) asparagine glycosylation is present at asparagine 432. A beta-D-glucoside is bound by residues tryptophan 471, 478–479 (EW), and phenylalanine 487.

This sequence belongs to the glycosyl hydrolase 1 family.

The enzyme catalyses Hydrolysis of terminal, non-reducing beta-D-glucosyl residues with release of beta-D-glucose.. The polypeptide is Beta-glucosidase 1 (BGLU1) (Oryza sativa subsp. japonica (Rice)).